The primary structure comprises 298 residues: ADP/ATP translocase 2 (298 aa).

Position 1 is an N-acetylmethionine (methionine 1). Residues 1 to 7 (MTDAAVS) are Mitochondrial intermembrane-facing. Threonine 2 bears the N-acetylthreonine; in ADP/ATP translocase 2, N-terminally processed mark. The Solcar 1 repeat unit spans residues 6-98 (VSFAKDFLAG…FAFKDKYKQI (93 aa)). Position 7 is a phosphoserine (serine 7). The helical transmembrane segment at 8–37 (FAKDFLAGGVAAAISKTAVAPIERVKLLLQ) threads the bilayer. Position 23 is an N6-malonyllysine (lysine 23). At 38 to 74 (VQHASKQITADKQYKGIMDCVVRIPKEQGVLSFWRGN) the chain is on the mitochondrial matrix side. Lysine 43 bears the N6-succinyllysine mark. Position 52 is an N6,N6,N6-trimethyllysine; alternate (lysine 52). Lysine 52 carries the post-translational modification N6,N6-dimethyllysine; alternate. Lysine 52 carries the post-translational modification N6-methyllysine; alternate. Residues 75 to 99 (LANVIRYFPTQALNFAFKDKYKQIF) traverse the membrane as a helical segment. Residues arginine 80 and lysine 92 each contribute to the ADP site. 2 positions are modified to N6-malonyllysine: lysine 92 and lysine 96. Over 100 to 109 (LGGVDKRTQF) the chain is Mitochondrial intermembrane. Lysine 105 bears the N6-acetyllysine; alternate mark. Lysine 105 bears the N6-succinyllysine; alternate mark. Residues 110 to 130 (WRYFAGNLASGGAAGATSLCF) traverse the membrane as a helical segment. 2 Solcar repeats span residues 111–201 (RYFA…AKGM) and 212–297 (ISWM…IKKY). Over 131–178 (VYPLDFARTRLAADVGKAGDAREFKGLGDCLVKITKSDGIRGLYQGFN) the chain is Mitochondrial matrix. Lysine 147 is subject to N6-methyllysine; alternate. Lysine 147 and lysine 155 each carry N6-acetyllysine; alternate. An N6-succinyllysine; alternate mark is found at lysine 147 and lysine 155. Lysine 147 is subject to N6-malonyllysine; alternate. N6-acetyllysine occurs at positions 163 and 166. The helical transmembrane segment at 179–199 (VSVQGIIIYRAAYFGIYDTAK) threads the bilayer. The Mitochondrial intermembrane segment spans residues 200 to 210 (GMLPDPKNTHI). Residues 211–231 (FISWMIAQSVTAVAGLTSYPF) traverse the membrane as a helical segment. Topologically, residues 232 to 273 (DTVRRRMMMQSGRKGSDIMYTGTIDCWKKIARDEGSKAFFKG) are mitochondrial matrix. Arginine 235 provides a ligand contact to ADP. The important for transport activity stretch occupies residues 235-240 (RRRMMM). Residues 235–240 (RRRMMM) carry the Nucleotide carrier signature motif motif. N6-acetyllysine; alternate is present on lysine 268. Lysine 268 is modified (N6-succinyllysine; alternate). Residues 274–291 (AWSNVLRGMGGAFVLVLY) traverse the membrane as a helical segment. The Mitochondrial intermembrane portion of the chain corresponds to 292–298 (DEIKKYT).

Belongs to the mitochondrial carrier (TC 2.A.29) family. Monomer. Component of the MMXD complex, which includes CIAO1, ERCC2, CIAO2B, MMS19 and SLC25A5/ANT2. Interacts with AK4. Interacts with TIMM44; leading to inhibit the presequence translocase TIMM23, thereby promoting stabilization of PINK1. In terms of processing, trimethylated by ANTKMT at Lys-52.

It localises to the mitochondrion inner membrane. It is found in the membrane. The catalysed reaction is ADP(in) + ATP(out) = ADP(out) + ATP(in). The enzyme catalyses H(+)(in) = H(+)(out). Its activity is regulated as follows. The matrix-open state (m-state) is inhibited by the membrane-permeable bongkrekic acid (BKA). The cytoplasmic-open state (c-state) is inhibited by the membrane-impermeable toxic inhibitor carboxyatractyloside (CATR). Proton transporter activity is inhibited by ADP:ATP antiporter activity. In terms of biological role, ADP:ATP antiporter that mediates import of ADP into the mitochondrial matrix for ATP synthesis, and export of ATP out to fuel the cell. Cycles between the cytoplasmic-open state (c-state) and the matrix-open state (m-state): operates by the alternating access mechanism with a single substrate-binding site intermittently exposed to either the cytosolic (c-state) or matrix (m-state) side of the inner mitochondrial membrane. In addition to its ADP:ATP antiporter activity, also involved in mitochondrial uncoupling and mitochondrial permeability transition pore (mPTP) activity. Plays a role in mitochondrial uncoupling by acting as a proton transporter: proton transport uncouples the proton flows via the electron transport chain and ATP synthase to reduce the efficiency of ATP production and cause mitochondrial thermogenesis. Proton transporter activity is inhibited by ADP:ATP antiporter activity, suggesting that SLC25A5/ANT2 acts as a master regulator of mitochondrial energy output by maintaining a delicate balance between ATP production (ADP:ATP antiporter activity) and thermogenesis (proton transporter activity). Proton transporter activity requires free fatty acids as cofactor, but does not transport it. Probably mediates mitochondrial uncoupling in tissues that do not express UCP1. Also plays a key role in mPTP opening, a non-specific pore that enables free passage of the mitochondrial membranes to solutes of up to 1.5 kDa, and which contributes to cell death. It is however unclear if SLC25A5/ANT2 constitutes a pore-forming component of mPTP or regulates it. Acts as a regulator of mitophagy independently of ADP:ATP antiporter activity: promotes mitophagy via interaction with TIMM44, leading to inhibit the presequence translocase TIMM23, thereby promoting stabilization of PINK1. As part of the mitotic spindle-associated MMXD complex it may play a role in chromosome segregation. This chain is ADP/ATP translocase 2, found in Tachyglossus aculeatus aculeatus (Southeast Australian short-beaked echidna).